A 401-amino-acid chain; its full sequence is Arylacetamide deacetylase-like 2 (401 aa).

The signal sequence occupies residues 1-18 (MGLKALCLGLLCVLFVSH). The Involved in the stabilization of the negatively charged intermediate by the formation of the oxyanion hole signature appears at 111–113 (HGG). A disulfide bridge connects residues Cys-116 and Cys-338. Residues Ser-189, Asp-341, and His-371 contribute to the active site.

Belongs to the 'GDXG' lipolytic enzyme family.

It is found in the secreted. This is Arylacetamide deacetylase-like 2 (AADACL2) from Homo sapiens (Human).